A 682-amino-acid chain; its full sequence is Methionine--tRNA ligase (682 aa).

The short motif at 15–25 (PYANGAIHLGH) is the 'HIGH' region element. Zn(2+) is bound by residues Cys146, Cys149, Cys159, and Cys162. Residues 331 to 335 (KMSKS) carry the 'KMSKS' region motif. Lys334 lines the ATP pocket. A tRNA-binding domain is found at 580-682 (DFAKLDMRVA…SGVTAGMQVK (103 aa)).

This sequence belongs to the class-I aminoacyl-tRNA synthetase family. MetG type 1 subfamily. In terms of assembly, homodimer. Zn(2+) serves as cofactor.

It localises to the cytoplasm. The enzyme catalyses tRNA(Met) + L-methionine + ATP = L-methionyl-tRNA(Met) + AMP + diphosphate. Functionally, is required not only for elongation of protein synthesis but also for the initiation of all mRNA translation through initiator tRNA(fMet) aminoacylation. This chain is Methionine--tRNA ligase, found in Haemophilus influenzae (strain ATCC 51907 / DSM 11121 / KW20 / Rd).